Reading from the N-terminus, the 224-residue chain is LexA repressor (224 aa).

Positions 31-51 (RAEIAAELGFKSANAAEEHLQ) form a DNA-binding region, H-T-H motif. Active-site for autocatalytic cleavage activity residues include Ser142 and Lys179.

The protein belongs to the peptidase S24 family. As to quaternary structure, homodimer.

It catalyses the reaction Hydrolysis of Ala-|-Gly bond in repressor LexA.. Its function is as follows. Represses a number of genes involved in the response to DNA damage (SOS response), including recA and lexA. In the presence of single-stranded DNA, RecA interacts with LexA causing an autocatalytic cleavage which disrupts the DNA-binding part of LexA, leading to derepression of the SOS regulon and eventually DNA repair. The sequence is that of LexA repressor from Verminephrobacter eiseniae (strain EF01-2).